The following is a 310-amino-acid chain: MKTLFEEIKASIKNNYNQDRSFCRPVLPWGGVFTIKAGRKAVSCTPLYVEIRLKNTCTIDGFLMLLYVILNENENFPRELSLHFGREFVDCFLYLMDTYSFTTVKLLWIWDKMEKQQYKSEVHKASLIIDLFGNEHDNFTKNLENLMSTIQESYCSNWRCPTRVQEDQQRTININPPQEIPHGNLIRLAVNELFCSKIELCEEHGCGGLREFSQRIFCHGAPPFVVLNMQHWKSEDLAYVPYYLDLSDHKYLLEGATLFNKEEHHYSAAFQIGGHWMHYDGLRNVNLILLNKPPEFLLLSSLVYIRATEK.

As to quaternary structure, interacts with DRD1.

Functionally, could be a regulator of the dopamine receptor signaling pathway. This chain is Dopamine receptor-interacting protein 1, found in Homo sapiens (Human).